Consider the following 35-residue polypeptide: U1-segestritoxin-Sf1a (35 aa).

2 disulfides stabilise this stretch: Cys-10–Cys-22 and Cys-17–Cys-28. The keys region for toxin activity stretch occupies residues Asp-31 to Trp-33.

The protein belongs to the neurotoxin 16 (SFI) family. Expressed by the venom gland.

The protein localises to the secreted. Insecticidal toxin. In Segestria florentina (Tube-web spider), this protein is U1-segestritoxin-Sf1a.